A 113-amino-acid polypeptide reads, in one-letter code: Hydrogenase maturation factor HypA (113 aa).

His-2 lines the Ni(2+) pocket. Residues Cys-73, Cys-76, Cys-89, and Cys-92 each coordinate Zn(2+).

It belongs to the HypA/HybF family.

Its function is as follows. Involved in the maturation of [NiFe] hydrogenases. Required for nickel insertion into the metal center of the hydrogenase. In Rhodopseudomonas palustris (strain TIE-1), this protein is Hydrogenase maturation factor HypA.